A 356-amino-acid polypeptide reads, in one-letter code: Histidine biosynthesis bifunctional protein HisB (356 aa).

The segment at 1-166 (MSKKVLFIDR…AICNYLTSLN (166 aa)) is histidinol-phosphatase. The active-site Nucleophile is the D9. Mg(2+)-binding residues include D9 and D11. Catalysis depends on D11, which acts as the Proton donor. Residues C93, H95, C101, and C103 each contribute to the Zn(2+) site. D130 lines the Mg(2+) pocket. The segment at 167–356 (RYAHVKRITK…VLPSSKGVLS (190 aa)) is imidazoleglycerol-phosphate dehydratase.

The protein in the N-terminal section; belongs to the histidinol-phosphatase family. This sequence in the C-terminal section; belongs to the imidazoleglycerol-phosphate dehydratase family. Mg(2+) serves as cofactor. It depends on Zn(2+) as a cofactor.

It localises to the cytoplasm. It carries out the reaction D-erythro-1-(imidazol-4-yl)glycerol 3-phosphate = 3-(imidazol-4-yl)-2-oxopropyl phosphate + H2O. It catalyses the reaction L-histidinol phosphate + H2O = L-histidinol + phosphate. It participates in amino-acid biosynthesis; L-histidine biosynthesis; L-histidine from 5-phospho-alpha-D-ribose 1-diphosphate: step 6/9. The protein operates within amino-acid biosynthesis; L-histidine biosynthesis; L-histidine from 5-phospho-alpha-D-ribose 1-diphosphate: step 8/9. This is Histidine biosynthesis bifunctional protein HisB from Baumannia cicadellinicola subsp. Homalodisca coagulata.